The sequence spans 296 residues: 4-diphosphocytidyl-2-C-methyl-D-erythritol kinase (296 aa).

Lys18 is a catalytic residue. 102–112 (PMGGGIGGGSS) contacts ATP. Residue Asp144 is part of the active site.

This sequence belongs to the GHMP kinase family. IspE subfamily.

It catalyses the reaction 4-CDP-2-C-methyl-D-erythritol + ATP = 4-CDP-2-C-methyl-D-erythritol 2-phosphate + ADP + H(+). Its pathway is isoprenoid biosynthesis; isopentenyl diphosphate biosynthesis via DXP pathway; isopentenyl diphosphate from 1-deoxy-D-xylulose 5-phosphate: step 3/6. Its function is as follows. Catalyzes the phosphorylation of the position 2 hydroxy group of 4-diphosphocytidyl-2C-methyl-D-erythritol. The chain is 4-diphosphocytidyl-2-C-methyl-D-erythritol kinase from Vibrio atlanticus (strain LGP32) (Vibrio splendidus (strain Mel32)).